Reading from the N-terminus, the 314-residue chain is Acetaldehyde dehydrogenase 4 (314 aa).

15-18 lines the NAD(+) pocket; that stretch reads SGNI. The active-site Acyl-thioester intermediate is the Cys-133. Residues 164 to 172 and Asn-292 contribute to the NAD(+) site; that span reads SAGPGTRAN.

It belongs to the acetaldehyde dehydrogenase family.

It carries out the reaction acetaldehyde + NAD(+) + CoA = acetyl-CoA + NADH + H(+). In Burkholderia lata (strain ATCC 17760 / DSM 23089 / LMG 22485 / NCIMB 9086 / R18194 / 383), this protein is Acetaldehyde dehydrogenase 4.